Reading from the N-terminus, the 266-residue chain is Norfluorocurarine synthase 1 (266 aa).

In terms of domain architecture, AB hydrolase-1 spans 11 to 121 (HFVLVHGAGH…VMPDAVNPPS (111 aa)). Catalysis depends on residues S86, D216, and H244.

This sequence belongs to the AB hydrolase superfamily. As to quaternary structure, homodimer.

It carries out the reaction 17-dehydropreakuammicine + H2O = norfluorocurarine + methanol + CO2. It participates in alkaloid biosynthesis. Hydrolase involved in the biosynthesis of curare monoterpene indole alkaloids (MIAs), natural products such as diaboline, a pharmacologically active compound used to regulate blood pressure. Curare alkaloids act as animal glycine receptor antagonists. Catalyzes the conversion of dehydropreakuammicine to norfluorocurarine. In Strychnos sp, this protein is Norfluorocurarine synthase 1.